A 205-amino-acid chain; its full sequence is Protein N-terminal glutamine amidohydrolase (205 aa).

Active-site residues include cysteine 20, histidine 74, and aspartate 90.

The protein belongs to the NTAQ1 family. As to quaternary structure, monomer.

It catalyses the reaction N-terminal L-glutaminyl-[protein] + H2O = N-terminal L-glutamyl-[protein] + NH4(+). Mediates the side-chain deamidation of N-terminal glutamine residues to glutamate, an important step in N-end rule pathway of protein degradation. Conversion of the resulting N-terminal glutamine to glutamate renders the protein susceptible to arginylation, polyubiquitination and degradation as specified by the N-end rule. Does not act on substrates with internal or C-terminal glutamine and does not act on non-glutamine residues in any position. This chain is Protein N-terminal glutamine amidohydrolase (tun), found in Drosophila willistoni (Fruit fly).